The sequence spans 209 residues: C-type lectin domain family 6 member A (209 aa).

Topologically, residues 1–20 are cytoplasmic; it reads MVQERQSQGKGVCWTLRLWS. A helical; Signal-anchor for type II membrane protein transmembrane segment spans residues 21-43; the sequence is AAVISMLLLSTCFIASCVVTYQF. Topologically, residues 44 to 209 are extracellular; that stretch reads IMDQPSRRLY…SICEMKKIYL (166 aa). Disulfide bonds link Cys64-Cys78, Cys79-Cys90, Cys107-Cys202, and Cys176-Cys194. A C-type lectin domain is found at 86 to 203; the sequence is FGSSCYLIST…CDSKHNSICE (118 aa). The Ca(2+) site is built by Val116, Asn118, and Glu122. Asn131 is a glycosylation site (N-linked (GlcNAc...) asparagine). Positions 168, 170, and 174 each coordinate Ca(2+). Residues 168-170, Glu174, Trp182, and 190-191 contribute to the alpha-D-mannopyranose site; these read EPN and ND. 3 residues coordinate Ca(2+): Asn190, Asp191, and Glu203.

Associated with FCER1G. Heterodimer with CLEC4D; this heterodimer forms a pattern recognition receptor (PRR) against fungal infection. In terms of tissue distribution, expressed by the XS52 DC (dendritic cell) line (at protein level). Expressed constitutively by the epidermis, and skin resident DC appear to be the major source of this expression. Expressed in the spleen and thymus. Expression was undetectable in non-DC lines, including macrophage lines (J774 and Raw), T-cell lines (7-17, HDK-1, and D10), B-cell hybridoma (5C5), a keratinocyte line (Pam 212), and a fibroblast line (NS01).

The protein localises to the cell membrane. Its function is as follows. Calcium-dependent lectin that acts as a pattern recognition receptor (PRR) of the innate immune system: specifically recognizes and binds alpha-mannans on C.albicans hypheas. Binding of C.albicans alpha-mannans to this receptor complex leads to phosphorylation of the immunoreceptor tyrosine-based activation motif (ITAM) of FCER1G, triggering activation of SYK, CARD9 and NF-kappa-B, consequently driving maturation of antigen-presenting cells and shaping antigen-specific priming of T-cells toward effector T-helper 1 and T-helper 17 cell subtypes. Also recognizes, in a mannose-dependent manner, allergens from house dust mite and fungi, by promoting cysteinyl leukotriene production. Recognizes soluble elements from the eggs of Shistosoma mansoni altering adaptive immune responses. The protein is C-type lectin domain family 6 member A of Mus musculus (Mouse).